The chain runs to 220 residues: Ribosomal RNA large subunit methyltransferase E (220 aa).

S-adenosyl-L-methionine-binding residues include glycine 60, tryptophan 62, aspartate 92, aspartate 108, and aspartate 133. Lysine 173 (proton acceptor) is an active-site residue.

The protein belongs to the class I-like SAM-binding methyltransferase superfamily. RNA methyltransferase RlmE family.

Its subcellular location is the cytoplasm. It carries out the reaction uridine(2552) in 23S rRNA + S-adenosyl-L-methionine = 2'-O-methyluridine(2552) in 23S rRNA + S-adenosyl-L-homocysteine + H(+). Functionally, specifically methylates the uridine in position 2552 of 23S rRNA at the 2'-O position of the ribose in the fully assembled 50S ribosomal subunit. In Paraburkholderia xenovorans (strain LB400), this protein is Ribosomal RNA large subunit methyltransferase E.